Consider the following 504-residue polypeptide: O-phosphoseryl-tRNA(Sec) selenium transferase (504 aa).

The tetramerization stretch occupies residues 1 to 44; that stretch reads MNPESFAAGERRVSPAYVRQGCEARRAHEHLIRLLLEQGKCPED. Ser14 bears the Phosphoserine mark. Arg75 contributes to the pyridoxal 5'-phosphate binding site. A phosphate loop (P-loop) region spans residues 96-106; it reads GRSGDISAVQP. The substrate site is built by Arg97, Ser98, and Gln105. Arg271 is a binding site for tRNA. An N6-(pyridoxal phosphate)lysine modification is found at Lys284. A substrate-binding site is contributed by Arg313. The tRNA site is built by Arg398 and Lys463.

Belongs to the SepSecS family. As to quaternary structure, homotetramer formed by a catalytic dimer and a non-catalytic dimer serving as a binding platform that orients tRNASec for catalysis. Each tetramer binds the CCA ends of two tRNAs which point to the active sites of the catalytic dimer. The cofactor is pyridoxal 5'-phosphate.

The protein resides in the cytoplasm. The catalysed reaction is O-phospho-L-seryl-tRNA(Sec) + selenophosphate + H2O = L-selenocysteinyl-tRNA(Sec) + 2 phosphate. It functions in the pathway aminoacyl-tRNA biosynthesis; selenocysteinyl-tRNA(Sec) biosynthesis; selenocysteinyl-tRNA(Sec) from L-seryl-tRNA(Sec) (archaeal/eukaryal route): step 2/2. Functionally, converts O-phosphoseryl-tRNA(Sec) to selenocysteinyl-tRNA(Sec) required for selenoprotein biosynthesis. The protein is O-phosphoseryl-tRNA(Sec) selenium transferase (Sepsecs) of Mus musculus (Mouse).